A 267-amino-acid chain; its full sequence is Adenosine 5'-phosphosulfate reductase (267 aa).

Residues 1–29 are disordered; the sequence is MPPFATIPATERNSAAQHQDPSPMSQPFD. A compositionally biased stretch (polar residues) spans 11–25; sequence ERNSAAQHQDPSPMS. [4Fe-4S] cluster is bound by residues C139, C140, C228, and C231. The active-site Nucleophile; cysteine thiosulfonate intermediate is the C256.

It belongs to the PAPS reductase family. CysH subfamily. It depends on [4Fe-4S] cluster as a cofactor.

It localises to the cytoplasm. It carries out the reaction [thioredoxin]-disulfide + sulfite + AMP + 2 H(+) = adenosine 5'-phosphosulfate + [thioredoxin]-dithiol. It participates in sulfur metabolism; hydrogen sulfide biosynthesis; sulfite from sulfate. In terms of biological role, catalyzes the formation of sulfite from adenosine 5'-phosphosulfate (APS) using thioredoxin as an electron donor. The sequence is that of Adenosine 5'-phosphosulfate reductase from Pseudomonas aeruginosa (strain LESB58).